We begin with the raw amino-acid sequence, 377 residues long: Lactosylceramide 1,3-N-acetyl-beta-D-glucosaminyltransferase A (377 aa).

The Cytoplasmic segment spans residues 1–12 (MLISARRLRRCQ). The helical; Signal-anchor for type II membrane protein transmembrane segment at 13-30 (FLQLLASCFVLSLMALLV) threads the bilayer. Over 31 to 377 (QEDNSLISHV…DTYPCSAAWS (347 aa)) the chain is Lumenal. 3 N-linked (GlcNAc...) asparagine glycosylation sites follow: N56, N167, and N275.

It belongs to the glycosyltransferase 31 family.

It localises to the golgi apparatus membrane. The enzyme catalyses a beta-D-Gal-(1-&gt;4)-beta-D-Glc-(1&lt;-&gt;1)-Cer(d18:1(4E)) + UDP-N-acetyl-alpha-D-glucosamine = a beta-D-GlcNAc-(1-&gt;3)-beta-D-Gal-(1-&gt;4)-beta-D-Glc-(1&lt;-&gt;1)-Cer(d18:1(4E)) + UDP + H(+). The catalysed reaction is a neolactoside nLc4Cer(d18:1(4E)) + UDP-N-acetyl-alpha-D-glucosamine = a neolactoside IV(3)-beta-GlcNAc-nLc4Cer(d18:1(4E)) + UDP + H(+). It participates in protein modification; protein glycosylation. Beta-1,3-N-acetylglucosaminyltransferase that plays a key role in the synthesis of lacto- or neolacto-series carbohydrate chains on glycolipids. The sequence is that of Lactosylceramide 1,3-N-acetyl-beta-D-glucosaminyltransferase A (b3gnt5-a) from Xenopus laevis (African clawed frog).